A 352-amino-acid chain; its full sequence is Ion-translocating oxidoreductase complex subunit D (352 aa).

A run of 4 helical transmembrane segments spans residues 20 to 40 (IMLLVLLAAVPGIAAQLWFFG), 42 to 62 (GTLVQILLASVSTLLAEALVL), 89 to 109 (IPPLAPWWMVVLGTVFAVIIA), and 123 to 143 (PAMIGYVVLLISFPVQMTSWL). FMN phosphoryl threonine is present on threonine 187. 5 helical membrane passes run 214-234 (ILAGAGWQWVNLAWLAGGLWL), 242-262 (WHIPLSFLVTLALCATLGWLF), 267-287 (LAAPQIHLLSGATMLGAFFIL), 301-321 (LIFGALAGLLVWLIRSFGGYP), and 322-342 (DGVAFAVLLANITVPLIDYYT).

Belongs to the NqrB/RnfD family. As to quaternary structure, the complex is composed of six subunits: RsxA, RsxB, RsxC, RsxD, RsxE and RsxG. The cofactor is FMN.

The protein localises to the cell inner membrane. Functionally, part of a membrane-bound complex that couples electron transfer with translocation of ions across the membrane. Required to maintain the reduced state of SoxR. The polypeptide is Ion-translocating oxidoreductase complex subunit D (Shigella boydii serotype 18 (strain CDC 3083-94 / BS512)).